The sequence spans 550 residues: Chaperonin GroEL (550 aa).

Residues 30 to 33 (TLGP), Lys51, 87 to 91 (DGTTT), Gly415, and Asp496 contribute to the ATP site.

It belongs to the chaperonin (HSP60) family. As to quaternary structure, forms a cylinder of 14 subunits composed of two heptameric rings stacked back-to-back. Interacts with the co-chaperonin GroES.

It localises to the cytoplasm. The catalysed reaction is ATP + H2O + a folded polypeptide = ADP + phosphate + an unfolded polypeptide.. Functionally, together with its co-chaperonin GroES, plays an essential role in assisting protein folding. The GroEL-GroES system forms a nano-cage that allows encapsulation of the non-native substrate proteins and provides a physical environment optimized to promote and accelerate protein folding. This is Chaperonin GroEL from Rickettsia typhi (strain ATCC VR-144 / Wilmington).